We begin with the raw amino-acid sequence, 286 residues long: Pyridoxal kinase PdxY (286 aa).

Residues Ser9 and 44-45 (MQ) each bind substrate. 3 residues coordinate ATP: Asp111, Glu147, and Lys180. Substrate is bound at residue Asp221.

The protein belongs to the pyridoxine kinase family. PdxY subfamily. In terms of assembly, homodimer. The cofactor is Mg(2+).

It carries out the reaction pyridoxal + ATP = pyridoxal 5'-phosphate + ADP + H(+). It functions in the pathway cofactor metabolism; pyridoxal 5'-phosphate salvage; pyridoxal 5'-phosphate from pyridoxal: step 1/1. Its function is as follows. Pyridoxal kinase involved in the salvage pathway of pyridoxal 5'-phosphate (PLP). Catalyzes the phosphorylation of pyridoxal to PLP. This chain is Pyridoxal kinase PdxY, found in Burkholderia lata (strain ATCC 17760 / DSM 23089 / LMG 22485 / NCIMB 9086 / R18194 / 383).